The chain runs to 59 residues: uncharacterized protein (59 aa).

This is an uncharacterized protein from Caenorhabditis elegans.